We begin with the raw amino-acid sequence, 423 residues long: tRNA(Ile2) 2-agmatinylcytidine synthetase TiaS (423 aa).

The OB DNA-binding region spans 273–347 (VIVYGRVVEE…GINIEKIKIL (75 aa)).

This sequence belongs to the TiaS family.

The protein resides in the cytoplasm. The catalysed reaction is cytidine(34) in tRNA(Ile2) + agmatine + ATP + H2O = 2-agmatinylcytidine(34) in tRNA(Ile2) + AMP + 2 phosphate + 2 H(+). ATP-dependent agmatine transferase that catalyzes the formation of 2-agmatinylcytidine (agm2C) at the wobble position (C34) of tRNA(Ile2), converting the codon specificity from AUG to AUA. The protein is tRNA(Ile2) 2-agmatinylcytidine synthetase TiaS of Methanocaldococcus jannaschii (strain ATCC 43067 / DSM 2661 / JAL-1 / JCM 10045 / NBRC 100440) (Methanococcus jannaschii).